A 109-amino-acid polypeptide reads, in one-letter code: Large ribosomal subunit protein uL22 (109 aa).

This sequence belongs to the universal ribosomal protein uL22 family. As to quaternary structure, part of the 50S ribosomal subunit.

This protein binds specifically to 23S rRNA; its binding is stimulated by other ribosomal proteins, e.g. L4, L17, and L20. It is important during the early stages of 50S assembly. It makes multiple contacts with different domains of the 23S rRNA in the assembled 50S subunit and ribosome. Its function is as follows. The globular domain of the protein is located near the polypeptide exit tunnel on the outside of the subunit, while an extended beta-hairpin is found that lines the wall of the exit tunnel in the center of the 70S ribosome. The protein is Large ribosomal subunit protein uL22 of Herminiimonas arsenicoxydans.